A 443-amino-acid polypeptide reads, in one-letter code: Threonine/serine transporter TdcC (443 aa).

Helical transmembrane passes span T22–I42, A44–F64, G97–V117, F140–M160, V163–I183, I207–I227, M261–A281, F311–F331, I366–L386, I389–I409, and D423–F443.

It belongs to the amino acid/polyamine transporter 2 family. SdaC/TdcC subfamily.

It localises to the cell inner membrane. The enzyme catalyses L-threonine(in) + H(+)(in) = L-threonine(out) + H(+)(out). It catalyses the reaction L-serine(in) + H(+)(in) = L-serine(out) + H(+)(out). Involved in the import of threonine and serine into the cell, with the concomitant import of a proton (symport system). The polypeptide is Threonine/serine transporter TdcC (Shigella boydii serotype 18 (strain CDC 3083-94 / BS512)).